The sequence spans 469 residues: UDP-N-acetylmuramoylalanine--D-glutamate ligase (469 aa).

125–131 (GTNGKTT) contributes to the ATP binding site.

The protein belongs to the MurCDEF family.

It is found in the cytoplasm. The catalysed reaction is UDP-N-acetyl-alpha-D-muramoyl-L-alanine + D-glutamate + ATP = UDP-N-acetyl-alpha-D-muramoyl-L-alanyl-D-glutamate + ADP + phosphate + H(+). It functions in the pathway cell wall biogenesis; peptidoglycan biosynthesis. Its function is as follows. Cell wall formation. Catalyzes the addition of glutamate to the nucleotide precursor UDP-N-acetylmuramoyl-L-alanine (UMA). This is UDP-N-acetylmuramoylalanine--D-glutamate ligase from Prochlorococcus marinus (strain NATL2A).